Here is a 300-residue protein sequence, read N- to C-terminus: Acetaldehyde dehydrogenase 1 (300 aa).

11–14 (SGNI) lines the NAD(+) pocket. Catalysis depends on cysteine 126, which acts as the Acyl-thioester intermediate. NAD(+) is bound by residues 157-165 (SAGPGTRAN) and asparagine 276.

Belongs to the acetaldehyde dehydrogenase family.

It carries out the reaction acetaldehyde + NAD(+) + CoA = acetyl-CoA + NADH + H(+). The protein is Acetaldehyde dehydrogenase 1 of Rhodococcus erythropolis (strain PR4 / NBRC 100887).